Consider the following 156-residue polypeptide: MTQSLHYSSPRETLTDTIMMAKIRKNLTFEAINQGTGLSLAFVTAALLGQHPLPEQAARVVAEKLDLDEDAIRLLQTIPLRGSIPGGVPTDPTIYRFYEMVQIYGSTLKALVHEQFGDGIISAINFKLDIKKVPDPDGGERAVITLDGKYLPTKPF.

Active-site residues include Arg96, Glu99, and Ser122.

The protein belongs to the cyanase family.

It carries out the reaction cyanate + hydrogencarbonate + 3 H(+) = NH4(+) + 2 CO2. Its function is as follows. Catalyzes the reaction of cyanate with bicarbonate to produce ammonia and carbon dioxide. In Serratia proteamaculans (strain 568), this protein is Cyanate hydratase.